Reading from the N-terminus, the 91-residue chain is DNA-binding protein HU (91 aa).

Belongs to the bacterial histone-like protein family.

In terms of biological role, histone-like DNA-binding protein which is capable of wrapping DNA to stabilize it, and thus to prevent its denaturation under extreme environmental conditions. Also seems to act as a fortuitous virulence factor in delayed sequelae by binding to heparan sulfate-proteoglycans in the extracellular matrix of target organs and acting as a nidus for in situ immune complex formation. This Streptococcus downei (Streptococcus sobrinus) protein is DNA-binding protein HU (hup).